We begin with the raw amino-acid sequence, 247 residues long: Adenosylcobinamide-GDP ribazoletransferase (247 aa).

The next 5 helical transmembrane spans lie at 34 to 54 (IITFPLIGLLLGAISGLVFMV), 59 to 79 (CGVPLAALFSVLVLALMTGGF), 113 to 133 (GGLALIFVVLAKILVLSELAL), 138 to 158 (ILALLAAACAVSRGTAALLMY), and 194 to 214 (VLLPGMHGVAAMVVTMVAIFI).

It belongs to the CobS family. Mg(2+) serves as cofactor.

It localises to the cell inner membrane. It catalyses the reaction alpha-ribazole + adenosylcob(III)inamide-GDP = adenosylcob(III)alamin + GMP + H(+). The enzyme catalyses alpha-ribazole 5'-phosphate + adenosylcob(III)inamide-GDP = adenosylcob(III)alamin 5'-phosphate + GMP + H(+). It functions in the pathway cofactor biosynthesis; adenosylcobalamin biosynthesis; adenosylcobalamin from cob(II)yrinate a,c-diamide: step 7/7. Its function is as follows. Joins adenosylcobinamide-GDP and alpha-ribazole to generate adenosylcobalamin (Ado-cobalamin). Also synthesizes adenosylcobalamin 5'-phosphate from adenosylcobinamide-GDP and alpha-ribazole 5'-phosphate. The protein is Adenosylcobinamide-GDP ribazoletransferase of Shigella boydii serotype 4 (strain Sb227).